The chain runs to 495 residues: Lysine--tRNA ligase (495 aa).

The Mg(2+) site is built by Glu406 and Glu413.

This sequence belongs to the class-II aminoacyl-tRNA synthetase family. In terms of assembly, homodimer. Mg(2+) serves as cofactor.

The protein resides in the cytoplasm. The catalysed reaction is tRNA(Lys) + L-lysine + ATP = L-lysyl-tRNA(Lys) + AMP + diphosphate. This is Lysine--tRNA ligase from Staphylococcus aureus (strain MW2).